We begin with the raw amino-acid sequence, 300 residues long: Inosose dehydratase (300 aa).

The protein belongs to the IolE/MocC family. Requires glutathione as cofactor. It depends on Co(2+) as a cofactor. Mn(2+) is required as a cofactor.

The enzyme catalyses scyllo-inosose = 3D-3,5/4-trihydroxycyclohexane-1,2-dione + H2O. It participates in polyol metabolism; myo-inositol degradation into acetyl-CoA; acetyl-CoA from myo-inositol: step 2/7. In terms of biological role, catalyzes the dehydration of inosose (2-keto-myo-inositol, 2KMI or 2,4,6/3,5-pentahydroxycyclohexanone) to 3D-(3,5/4)-trihydroxycyclohexane-1,2-dione (D-2,3-diketo-4-deoxy-epi-inositol). This is Inosose dehydratase from Bacillus licheniformis (strain ATCC 14580 / DSM 13 / JCM 2505 / CCUG 7422 / NBRC 12200 / NCIMB 9375 / NCTC 10341 / NRRL NRS-1264 / Gibson 46).